Consider the following 122-residue polypeptide: Large ribosomal subunit protein bL12 (122 aa).

This sequence belongs to the bacterial ribosomal protein bL12 family. In terms of assembly, homodimer. Part of the ribosomal stalk of the 50S ribosomal subunit. Forms a multimeric L10(L12)X complex, where L10 forms an elongated spine to which 2 to 4 L12 dimers bind in a sequential fashion. Binds GTP-bound translation factors.

In terms of biological role, forms part of the ribosomal stalk which helps the ribosome interact with GTP-bound translation factors. Is thus essential for accurate translation. This Pseudomonas aeruginosa (strain LESB58) protein is Large ribosomal subunit protein bL12.